The primary structure comprises 712 residues: Translation initiation factor eIF2B subunit epsilon (712 aa).

Residues 1–20 (MAGKKGQKKSGLGNHGKNSD) form a disordered region. 6 positions are modified to phosphoserine: S478, S481, S507, S525, S538, and S707. A W2 domain is found at 539 to 710 (EFEDEDFEKE…QNADEESSSE (172 aa)).

It belongs to the eIF-2B gamma/epsilon subunits family. Component of the translation initiation factor 2B (eIF2B) complex which is a heterodecamer of two sets of five different subunits: alpha, beta, gamma, delta and epsilon. Subunits alpha, beta and delta comprise a regulatory subcomplex and subunits epsilon and gamma comprise a catalytic subcomplex. Within the complex, the hexameric regulatory complex resides at the center, with the two heterodimeric catalytic subcomplexes bound on opposite sides.

The protein resides in the cytoplasm. Its subcellular location is the cytosol. In terms of biological role, acts as a catalytic component of the translation initiation factor 2B (eIF2B) complex, which catalyzes the exchange of GDP for GTP on eukaryotic initiation factor 2 (eIF2) and is regulated by phosphorylated eIF2. Its guanine nucleotide exchange factor activity is repressed when bound to eIF2 complex phosphorylated on the alpha subunit, thereby limiting the amount of methionyl-initiator methionine tRNA available to the ribosome and consequently global translation is repressed. It activates the synthesis of GCN4 in yeast under amino acid starvation conditions by suppressing the inhibitory effects of multiple AUG codons present in the leader of GCN4 mRNA. It may promote either repression or activation of GCN4 expression depending on amino acid availability. GCD6 and GCD7 repress GCN4 expression at the translational level by ensuring that ribosomes which have translated UORF1 will reinitiate at UORF2, -3, or -4 and thus fail to reach the GCN4 start site. The polypeptide is Translation initiation factor eIF2B subunit epsilon (GCD6) (Saccharomyces cerevisiae (strain ATCC 204508 / S288c) (Baker's yeast)).